The primary structure comprises 392 residues: NADH-quinone oxidoreductase subunit D (392 aa).

It belongs to the complex I 49 kDa subunit family. As to quaternary structure, NDH-1 is composed of 14 different subunits. Subunits NuoB, C, D, E, F, and G constitute the peripheral sector of the complex.

The protein resides in the cell inner membrane. It catalyses the reaction a quinone + NADH + 5 H(+)(in) = a quinol + NAD(+) + 4 H(+)(out). NDH-1 shuttles electrons from NADH, via FMN and iron-sulfur (Fe-S) centers, to quinones in the respiratory chain. The immediate electron acceptor for the enzyme in this species is believed to be ubiquinone. Couples the redox reaction to proton translocation (for every two electrons transferred, four hydrogen ions are translocated across the cytoplasmic membrane), and thus conserves the redox energy in a proton gradient. The sequence is that of NADH-quinone oxidoreductase subunit D from Paramagnetospirillum magneticum (strain ATCC 700264 / AMB-1) (Magnetospirillum magneticum).